The primary structure comprises 114 residues: UPF0342 protein PEPE_0673 (114 aa).

It belongs to the UPF0342 family.

The polypeptide is UPF0342 protein PEPE_0673 (Pediococcus pentosaceus (strain ATCC 25745 / CCUG 21536 / LMG 10740 / 183-1w)).